We begin with the raw amino-acid sequence, 103 residues long: MSNQRIRIRLKAFDHRLIDQSTAEIVDTAKRTGAQVRGPIPLPTRKERYTILTSPHVNKDARDQYEIRTHKRMIDIVEPTEKTVDALMRLDLAAGVDVQISLG.

The protein belongs to the universal ribosomal protein uS10 family. Part of the 30S ribosomal subunit.

In terms of biological role, involved in the binding of tRNA to the ribosomes. This chain is Small ribosomal subunit protein uS10, found in Colwellia psychrerythraea (strain 34H / ATCC BAA-681) (Vibrio psychroerythus).